We begin with the raw amino-acid sequence, 163 residues long: Calmodulin (163 aa).

An N-acetylalanine modification is found at Ala-2. EF-hand domains follow at residues 11–46, 47–82, 84–119, and 120–155; these read EQIAEFKEAFALFDKDGDGTITTKELGTVMRSLGQN, PTEAELQDMISEVDADGNGTIDFPEFLMLMARKMKE, DHEDELREAFKVFDKDGNGFISAAELRHVMTNLGEK, and LSEEEVDEMIREADVDGDGQVNYEEFVRMMTSGATD. Ca(2+)-binding residues include Asp-24, Asp-26, Asp-28, Thr-30, Glu-35, Asp-60, Asp-62, Asn-64, Thr-66, Glu-71, Asp-97, Asp-99, Asn-101, Glu-108, Asp-133, Asp-135, Asp-137, Gln-139, and Glu-144.

It belongs to the calmodulin family. As to quaternary structure, associates with the spoke-associated complex containing CFAP61, CFAP91 and CFAP251; the association is calcium sensitive. In terms of processing, trimethylation of Lys-119 observed in other calmodulins is absent here.

It localises to the cytoplasm. Its subcellular location is the cytoskeleton. It is found in the flagellum axoneme. Functionally, calmodulin mediates the control of a large number of enzymes, ion channels and other proteins by Ca(2+). Among the enzymes to be stimulated by the calmodulin-Ca(2+) complex are a number of protein kinases and phosphatases. The polypeptide is Calmodulin (Chlamydomonas reinhardtii (Chlamydomonas smithii)).